Consider the following 888-residue polypeptide: Tyrosine-protein kinase receptor UFO (888 aa).

The N-terminal stretch at 1–18 is a signal peptide; it reads MGRVPLAWWLALCCWGCA. The tract at residues 19–86 is interaction with GAS6; sequence AHKDTQTEAG…QTQVPLGEDW (68 aa). Topologically, residues 19-445 are extracellular; sequence AHKDTQTEAG…PPRAFSWPWW (427 aa). 2 Ig-like C2-type domains span residues 30-122 and 133-216; these read PFVG…TFVS and PYFL…ATIT. Asn-37 carries N-linked (GlcNAc...) asparagine glycosylation. The cysteines at positions 50 and 111 are disulfide-linked. N-linked (GlcNAc...) asparagine glycans are attached at residues Asn-151 and Asn-192. An intrachain disulfide couples Cys-154 to Cys-199. 2 Fibronectin type-III domains span residues 221 to 325 and 330 to 422; these read RPHH…TTEG and PPEN…PWRP. N-linked (GlcNAc...) asparagine glycosylation is found at Asn-333, Asn-339, and Asn-395. Residues 446-466 form a helical membrane-spanning segment; the sequence is YVLLGALVAAACVLILALFLV. The Cytoplasmic segment spans residues 467 to 888; that stretch reads HRRKKETRYG…PAPPGQEDGA (422 aa). Residues 530–801 enclose the Protein kinase domain; sequence VALGKTLGEG…ELREDLENTL (272 aa). Residues 536 to 544 and Lys-561 each bind ATP; that span reads LGEGEFGAV. The active-site Proton acceptor is the Asp-666. Phosphotyrosine; by autocatalysis is present on residues Tyr-697, Tyr-773, and Tyr-815. A disordered region spans residues 820 to 846; it reads EGGSHLEPRGAAGGADPPTQPDPKDSC. Residue Tyr-860 is modified to Phosphotyrosine; by autocatalysis. The tract at residues 865 to 888 is disordered; the sequence is STAPGPTLSADRGCPAPPGQEDGA.

Belongs to the protein kinase superfamily. Tyr protein kinase family. AXL/UFO subfamily. Heterodimer and heterotetramer with ligand GAS6. Interacts with CBL, GRB2, LCK, NCK2, PIK3R1, PIK3R2, PIK3R3, PLCG1, SOCS1 and TNS2. Part of a complex including AXL, TNK2 and GRB2, in which GRB2 promotes AXL recruitment by TNK2. Post-translationally, monoubiquitinated upon GAS6-binding. A very small proportion of the receptor could be subjected to polyubiquitination in a very transient fashion. In terms of processing, phosphorylated at tyrosine residues by autocatalysis, which activates kinase activity. In distinct substructures of a broad spectrum of developing tissues (in the late embryogenesis). In cells forming organ capsules as well as in connective tissue structures (in adult).

The protein localises to the cell membrane. It carries out the reaction L-tyrosyl-[protein] + ATP = O-phospho-L-tyrosyl-[protein] + ADP + H(+). With respect to regulation, activated by GAS6-binding and subsequent autophosphorylation. Functionally, receptor tyrosine kinase that transduces signals from the extracellular matrix into the cytoplasm by binding growth factor GAS6 and which is thus regulating many physiological processes including cell survival, cell proliferation, migration and differentiation. Ligand binding at the cell surface induces dimerization and autophosphorylation of AXL. Following activation by ligand, AXL binds and induces tyrosine phosphorylation of PI3-kinase subunits PIK3R1, PIK3R2 and PIK3R3; but also GRB2, PLCG1, LCK and PTPN11. Other downstream substrate candidates for AXL are CBL, NCK2, SOCS1 and TNS2. Recruitment of GRB2 and phosphatidylinositol 3 kinase regulatory subunits by AXL leads to the downstream activation of the AKT kinase. GAS6/AXL signaling plays a role in various processes such as endothelial cell survival during acidification by preventing apoptosis, optimal cytokine signaling during human natural killer cell development, hepatic regeneration, gonadotropin-releasing hormone neuron survival and migration, platelet activation, or regulation of thrombotic responses. Also plays an important role in inhibition of Toll-like receptors (TLRs)-mediated innate immune response. The sequence is that of Tyrosine-protein kinase receptor UFO (Axl) from Mus musculus (Mouse).